The following is a 237-amino-acid chain: Small ribosomal subunit protein uS2m (237 aa).

The protein belongs to the universal ribosomal protein uS2 family.

It localises to the mitochondrion. The protein is Small ribosomal subunit protein uS2m (RPS2) of Marchantia polymorpha (Common liverwort).